A 357-amino-acid polypeptide reads, in one-letter code: Hypersensitivity response secretion protein HrcU (357 aa).

The disordered stretch occupies residues 1–21 (MSDEKTEQPTDKKLEDAHRDG). 5 helical membrane-spanning segments follow: residues 29–49 (LTAA…ASVF), 84–104 (LVLM…IATW), 149–169 (VAVA…IVGA), 180–200 (IGMT…LILG), and 323–343 (LYGP…AWVG).

It belongs to the type III secretion exporter family.

Its subcellular location is the cell membrane. Its function is as follows. Involved in the secretion of PopA, a proteinaceous elicitor of the hypersensitivity response in plants. The polypeptide is Hypersensitivity response secretion protein HrcU (hrcU) (Ralstonia nicotianae (strain ATCC BAA-1114 / GMI1000) (Ralstonia solanacearum)).